Here is a 530-residue protein sequence, read N- to C-terminus: Plexin domain-containing protein 2 (530 aa).

An N-terminal signal peptide occupies residues 1–30; the sequence is MARFRRADLAAAGVMLLCHFLTDRFQFAHG. At 31-455 the chain is on the extracellular side; the sequence is EPGHHTNDWI…AEKKGGTLHA (425 aa). N-linked (GlcNAc...) asparagine glycans are attached at residues Asn103 and Asn160. The PSI domain occupies 327 to 372; sequence TCLQFNGCGPCVSSQIGFNCSWCSKLQRCSSGFDRHRQDWVDSGCP. Residues 378-387 are compositionally biased toward basic and acidic residues; sequence KEKMCEKTEP. Positions 378-399 are disordered; the sequence is KEKMCEKTEPGETSQTTTTSHT. Low complexity predominate over residues 390-399; sequence TSQTTTTSHT. The chain crosses the membrane as a helical span at residues 456–476; it reads GLIVGILILVLIIAAAILVTV. Topologically, residues 477 to 530 are cytoplasmic; the sequence is YMYHHPTSAASIFFIERRPSRWPAMKFRRGSGHPAYAEVEPVGEKEGFIVSEQC. Position 507 is a phosphoserine (Ser507).

The protein belongs to the plexin family. As to quaternary structure, interacts with CTTN. In terms of tissue distribution, expressed in tumor endothelium and in vessels of some normal tissues, such as the muscle and lung.

The protein resides in the membrane. Functionally, may play a role in tumor angiogenesis. This chain is Plexin domain-containing protein 2 (Plxdc2), found in Mus musculus (Mouse).